Reading from the N-terminus, the 156-residue chain is Rhombotin-1 (156 aa).

LIM zinc-binding domains are found at residues Cys24–Gly83 and Cys88–Leu147.

Expressed mainly in the central nervous. Low level of expression in other tissues including thymus.

It localises to the nucleus. May be involved in gene regulation within neural lineage cells potentially by direct DNA binding or by binding to other transcription factors. This is Rhombotin-1 (LMO1) from Homo sapiens (Human).